A 289-amino-acid chain; its full sequence is Pantothenate synthetase (289 aa).

33 to 40 contacts ATP; the sequence is MGYLHEGH. Residue His40 is the Proton donor of the active site. Gln70 contacts (R)-pantoate. Beta-alanine is bound at residue Gln70. 157 to 160 lines the ATP pocket; that stretch reads GEKD. (R)-pantoate is bound at residue Gln163. Residues Val186 and 194–197 each bind ATP; that span reads LSSR.

The protein belongs to the pantothenate synthetase family. In terms of assembly, homodimer.

It is found in the cytoplasm. The catalysed reaction is (R)-pantoate + beta-alanine + ATP = (R)-pantothenate + AMP + diphosphate + H(+). It participates in cofactor biosynthesis; (R)-pantothenate biosynthesis; (R)-pantothenate from (R)-pantoate and beta-alanine: step 1/1. In terms of biological role, catalyzes the condensation of pantoate with beta-alanine in an ATP-dependent reaction via a pantoyl-adenylate intermediate. This is Pantothenate synthetase from Anaeromyxobacter dehalogenans (strain 2CP-C).